A 231-amino-acid chain; its full sequence is Large ribosomal subunit protein uL1 (231 aa).

Belongs to the universal ribosomal protein uL1 family. As to quaternary structure, part of the 50S ribosomal subunit.

Its function is as follows. Binds directly to 23S rRNA. The L1 stalk is quite mobile in the ribosome, and is involved in E site tRNA release. Functionally, protein L1 is also a translational repressor protein, it controls the translation of the L11 operon by binding to its mRNA. The polypeptide is Large ribosomal subunit protein uL1 (Pseudomonas entomophila (strain L48)).